The primary structure comprises 158 residues: Transcriptional repressor NrdR (158 aa).

Positions 1–20 (MRCPSCGSLDTQVKDSRPTE) are disordered. Residues 3–34 (CPSCGSLDTQVKDSRPTEDSSVIRRRRVCLTC) fold into a zinc finger. The 91-residue stretch at 49 to 139 (LTVIKRNGRR…VYRNFREAKD (91 aa)) folds into the ATP-cone domain.

The protein belongs to the NrdR family. Requires Zn(2+) as cofactor.

Negatively regulates transcription of bacterial ribonucleotide reductase nrd genes and operons by binding to NrdR-boxes. This is Transcriptional repressor NrdR from Afipia carboxidovorans (strain ATCC 49405 / DSM 1227 / KCTC 32145 / OM5) (Oligotropha carboxidovorans).